The primary structure comprises 447 residues: Ribulose bisphosphate carboxylase large chain (447 aa).

Asparagine 89 and threonine 139 together coordinate substrate. Lysine 141 functions as the Proton acceptor in the catalytic mechanism. Lysine 143 is a binding site for substrate. Mg(2+) is bound by residues lysine 167, aspartate 169, and glutamate 170. The residue at position 167 (lysine 167) is an N6-carboxylysine. The active-site Proton acceptor is the histidine 260. Residues arginine 261, histidine 293, and serine 345 each contribute to the substrate site.

Belongs to the RuBisCO large chain family. Type I subfamily. Heterohexadecamer of 8 large chains and 8 small chains; disulfide-linked. The disulfide link is formed within the large subunit homodimers. Mg(2+) is required as a cofactor. In terms of processing, the disulfide bond which can form in the large chain dimeric partners within the hexadecamer appears to be associated with oxidative stress and protein turnover.

The protein resides in the plastid. The protein localises to the chloroplast. The catalysed reaction is 2 (2R)-3-phosphoglycerate + 2 H(+) = D-ribulose 1,5-bisphosphate + CO2 + H2O. It carries out the reaction D-ribulose 1,5-bisphosphate + O2 = 2-phosphoglycolate + (2R)-3-phosphoglycerate + 2 H(+). In terms of biological role, ruBisCO catalyzes two reactions: the carboxylation of D-ribulose 1,5-bisphosphate, the primary event in carbon dioxide fixation, as well as the oxidative fragmentation of the pentose substrate in the photorespiration process. Both reactions occur simultaneously and in competition at the same active site. This Convolvulus tricolor (Dwarf morning glory) protein is Ribulose bisphosphate carboxylase large chain.